The chain runs to 717 residues: Transport/processing ATP-binding protein ComA (717 aa).

The Peptidase C39 domain occupies glutamine 11–methionine 138. Residue cysteine 17 is part of the active site. Transmembrane regions (helical) follow at residues glycine 166 to serine 186, leucine 205 to alanine 225, leucine 237 to phenylalanine 257, threonine 282 to serine 302, asparagine 306 to methionine 326, and valine 397 to glycine 417. The region spanning isoleucine 168–threonine 450 is the ABC transmembrane type-1 domain. The region spanning methionine 484–serine 717 is the ABC transporter domain. Glycine 517–threonine 524 is an ATP binding site.

It belongs to the ABC transporter superfamily. Competence factor exporter (TC 3.A.1.112.1) family.

The protein resides in the cell membrane. Its function is as follows. Required for induction of competence. Seems to transport the competence-stimulating peptide (CSP). This is Transport/processing ATP-binding protein ComA (comA) from Streptococcus pneumoniae serotype 4 (strain ATCC BAA-334 / TIGR4).